Reading from the N-terminus, the 372-residue chain is Ligninase B (372 aa).

A signal peptide spans 1 to 21 (MAFKQLFAAISLALSLSAANA). A propeptide spanning residues 22–28 (AAVIEKR) is cleaved from the precursor. 4 disulfide bridges follow: C31-C43, C42-C313, C62-C148, and C277-C345. The Proton acceptor role is filled by H75. Positions 76, 94, 96, and 98 each coordinate Ca(2+). Position 204 (H204) interacts with heme b. The Ca(2+) site is built by S205, D222, T224, I227, and D229. N-linked (GlcNAc...) asparagine glycosylation is present at N285. The span at 350–361 (FPTLTTLPGPET) shows a compositional bias: low complexity. Positions 350 to 372 (FPTLTTLPGPETSVQRIPPPPGA) are disordered.

It belongs to the peroxidase family. Ligninase subfamily. Heme b is required as a cofactor. The cofactor is Ca(2+).

The catalysed reaction is 1-(3,4-dimethoxyphenyl)-2-(2-methoxyphenoxy)propane-1,3-diol + H2O2 = 3,4-dimethoxybenzaldehyde + guaiacol + glycolaldehyde + H2O. The enzyme catalyses 2 (3,4-dimethoxyphenyl)methanol + H2O2 = 2 (3,4-dimethoxyphenyl)methanol radical + 2 H2O. It functions in the pathway secondary metabolite metabolism; lignin degradation. Its function is as follows. Depolymerization of lignin. Catalyzes the C(alpha)-C(beta) cleavage of the propyl side chains of lignin. The protein is Ligninase B (LIPB) of Phanerodontia chrysosporium (White-rot fungus).